The chain runs to 674 residues: Transcription activator of gluconeogenesis PMAA_028970 (674 aa).

Positions 1 to 46 (MMDTDKDDLPSATDHSEHESGDAVKVEGGASKTASNSKDPSRPRRK) are disordered. The span at 14–25 (DHSEHESGDAVK) shows a compositional bias: basic and acidic residues. A DNA-binding region (zn(2)-C6 fungal-type) is located at residues 52–80 (CFACQRAHLTCGDERPCQRCIKRGLQDAC). Disordered regions lie at residues 117 to 181 (ISPT…ATPA), 250 to 321 (TGAG…SGLY), 344 to 374 (IGSN…SPMK), and 519 to 557 (NLNV…PGPN). The span at 120 to 148 (TEYTQNGTNNAQQQQQKSGTIYASSTPSY) shows a compositional bias: polar residues. Over residues 149–163 (NNNNGTFDTNNATNT) the composition is skewed to low complexity. Composition is skewed to polar residues over residues 269-278 (GQRSNSQQFG) and 285-294 (TTESPSQQSF). Low complexity-rich tracts occupy residues 348 to 366 (TFAS…IAPS) and 529 to 540 (NTSSQSDSTSSS).

The protein belongs to the ERT1/acuK family.

It is found in the nucleus. Its function is as follows. Transcription factor which regulates nonfermentable carbon utilization. Activator of gluconeogenetic genes. The protein is Transcription activator of gluconeogenesis PMAA_028970 of Talaromyces marneffei (strain ATCC 18224 / CBS 334.59 / QM 7333) (Penicillium marneffei).